Consider the following 317-residue polypeptide: tRNA uridine(34) hydroxylase (317 aa).

Positions 123-217 (EDDDTIVIDA…YGKDPETKGE (95 aa)) constitute a Rhodanese domain. Catalysis depends on Cys-177, which acts as the Cysteine persulfide intermediate.

Belongs to the TrhO family.

It catalyses the reaction uridine(34) in tRNA + AH2 + O2 = 5-hydroxyuridine(34) in tRNA + A + H2O. Its function is as follows. Catalyzes oxygen-dependent 5-hydroxyuridine (ho5U) modification at position 34 in tRNAs. This chain is tRNA uridine(34) hydroxylase, found in Staphylococcus carnosus (strain TM300).